A 62-amino-acid chain; its full sequence is Photosystem II reaction center protein Z (62 aa).

The next 2 helical transmembrane spans lie at Ala-8–Ala-28 and Phe-41–Ile-61.

Belongs to the PsbZ family. As to quaternary structure, PSII is composed of 1 copy each of membrane proteins PsbA, PsbB, PsbC, PsbD, PsbE, PsbF, PsbH, PsbI, PsbJ, PsbK, PsbL, PsbM, PsbT, PsbY, PsbZ, Psb30/Ycf12, at least 3 peripheral proteins of the oxygen-evolving complex and a large number of cofactors. It forms dimeric complexes.

The protein localises to the plastid. Its subcellular location is the chloroplast thylakoid membrane. Functionally, may control the interaction of photosystem II (PSII) cores with the light-harvesting antenna, regulates electron flow through the 2 photosystem reaction centers. PSII is a light-driven water plastoquinone oxidoreductase, using light energy to abstract electrons from H(2)O, generating a proton gradient subsequently used for ATP formation. The sequence is that of Photosystem II reaction center protein Z from Marchantia polymorpha (Common liverwort).